An 845-amino-acid chain; its full sequence is Protein P (845 aa).

Residues 1-179 form a terminal protein domain (TP) region; that stretch reads MPLSYQHFRK…FCGSPYSWEQ (179 aa). Positions 180–348 are spacer; the sequence is ELQHGRLVIK…YCLSHLVNLR (169 aa). Positions 226–245 are disordered; it reads GLQPHQGPLASSQPGRSGSI. The interval 349–692 is polymerase/reverse transcriptase domain (RT); that stretch reads EDWGPCDEHG…YMNLYPVARQ (344 aa). The 244-residue stretch at 359–602 folds into the Reverse transcriptase domain; the sequence is EHHIRIPRTP…YSLNFMGYII (244 aa). Mg(2+) is bound by residues Asp-431, Asp-553, and Asp-554.

This sequence belongs to the hepadnaviridae P protein family.

The enzyme catalyses DNA(n) + a 2'-deoxyribonucleoside 5'-triphosphate = DNA(n+1) + diphosphate. The catalysed reaction is Endonucleolytic cleavage to 5'-phosphomonoester.. With respect to regulation, activated by host HSP70 and HSP40 in vitro to be able to bind the epsilon loop of the pgRNA. Because deletion of the RNase H region renders the protein partly chaperone-independent, the chaperones may be needed indirectly to relieve occlusion of the RNA-binding site by this domain. Inhibited by several reverse-transcriptase inhibitors: Lamivudine, Adefovir and Entecavir. Functionally, multifunctional enzyme that converts the viral RNA genome into dsDNA in viral cytoplasmic capsids. This enzyme displays a DNA polymerase activity that can copy either DNA or RNA templates, and a ribonuclease H (RNase H) activity that cleaves the RNA strand of RNA-DNA heteroduplexes in a partially processive 3'- to 5'-endonucleasic mode. Neo-synthesized pregenomic RNA (pgRNA) are encapsidated together with the P protein, and reverse-transcribed inside the nucleocapsid. Initiation of reverse-transcription occurs first by binding the epsilon loop on the pgRNA genome, and is initiated by protein priming, thereby the 5'-end of (-)DNA is covalently linked to P protein. Partial (+)DNA is synthesized from the (-)DNA template and generates the relaxed circular DNA (RC-DNA) genome. After budding and infection, the RC-DNA migrates in the nucleus, and is converted into a plasmid-like covalently closed circular DNA (cccDNA). The activity of P protein does not seem to be necessary for cccDNA generation, and is presumably released from (+)DNA by host nuclear DNA repair machinery. This chain is Protein P, found in Homo sapiens (Human).